The chain runs to 510 residues: NAD(P)H-quinone oxidoreductase subunit 2, chloroplastic (510 aa).

The next 11 membrane-spanning stretches (helical) occupy residues 24–44 (LLLFHGSFIFPECILIFGLIL), 59–79 (WFYFISSTSLVMSITALLFRW), 99–119 (IFQFLILLCSTLCIPLSVEYI), 124–144 (MAITEFLLFVLTATLGGMFLC), 149–169 (LITIFVAPECFSLCSYLLSGY), 183–203 (YLLMGGASSSILVHGFSWLYG), 295–315 (WHLLLEILAILSMILGNLIAI), 323–343 (MLAYSSIGQIGYVIIGIIVGD), 347–367 (GYASMITYMLFYISMNLGTFA), 395–415 (ALSSALCLLSLGGLPPLAGFF), and 418–438 (LHLFWCGWQAGLYFLVSIGLL).

This sequence belongs to the complex I subunit 2 family. As to quaternary structure, NDH is composed of at least 16 different subunits, 5 of which are encoded in the nucleus.

The protein resides in the plastid. Its subcellular location is the chloroplast thylakoid membrane. It carries out the reaction a plastoquinone + NADH + (n+1) H(+)(in) = a plastoquinol + NAD(+) + n H(+)(out). The catalysed reaction is a plastoquinone + NADPH + (n+1) H(+)(in) = a plastoquinol + NADP(+) + n H(+)(out). Its function is as follows. NDH shuttles electrons from NAD(P)H:plastoquinone, via FMN and iron-sulfur (Fe-S) centers, to quinones in the photosynthetic chain and possibly in a chloroplast respiratory chain. The immediate electron acceptor for the enzyme in this species is believed to be plastoquinone. Couples the redox reaction to proton translocation, and thus conserves the redox energy in a proton gradient. This chain is NAD(P)H-quinone oxidoreductase subunit 2, chloroplastic, found in Maianthemum racemosum (False Solomon's-seal).